The primary structure comprises 214 residues: Phosphatidylcholine transfer protein (214 aa).

Met-1 bears the N-acetylmethionine mark. The 212-residue stretch at 1 to 212 (MELAAGSFSE…MARACQNYLK (212 aa)) folds into the START domain. A 1,2-diacyl-sn-glycero-3-phosphocholine is bound by residues Tyr-72 and Arg-78. At Ser-139 the chain carries Phosphoserine. An a 1,2-diacyl-sn-glycero-3-phosphocholine-binding site is contributed by Gln-157.

In terms of assembly, interacts with ACOT13/THEM2. As to expression, highest expression in liver, placenta, testis, kidney and heart. Low levels in brain and lung. No expression detected in thymus.

It localises to the cytoplasm. Catalyzes the transfer of phosphatidylcholine between membranes. Binds a single lipid molecule. The chain is Phosphatidylcholine transfer protein (PCTP) from Homo sapiens (Human).